A 329-amino-acid chain; its full sequence is Serine dehydratase-like (329 aa).

Position 1 is an N-acetylmethionine (methionine 1). Lysine 48 is modified (N6-(pyridoxal phosphate)lysine).

The protein belongs to the serine/threonine dehydratase family. Monomer. Homodimer. Pyridoxal 5'-phosphate is required as a cofactor. Abundantly expressed in liver.

It carries out the reaction L-serine = pyruvate + NH4(+). The catalysed reaction is L-threonine = 2-oxobutanoate + NH4(+). The enzyme catalyses L-glutamate = D-glutamate. Functionally, catalyzes the pyridoxal-phosphate-dependent dehydrative deamination of L-threonine and L-serine to ammonia and alpha-ketobutyrate and pyruvate, respectively. Also exhibits racemase activity towards L-glutamate and D-glutamate. This is Serine dehydratase-like (Sdsl) from Mus musculus (Mouse).